The primary structure comprises 242 residues: Ubiquinone biosynthesis O-methyltransferase (242 aa).

S-adenosyl-L-methionine is bound by residues Arg-44, Gly-64, Asp-85, and Met-129.

Belongs to the methyltransferase superfamily. UbiG/COQ3 family.

It catalyses the reaction a 3-demethylubiquinol + S-adenosyl-L-methionine = a ubiquinol + S-adenosyl-L-homocysteine + H(+). The enzyme catalyses a 3-(all-trans-polyprenyl)benzene-1,2-diol + S-adenosyl-L-methionine = a 2-methoxy-6-(all-trans-polyprenyl)phenol + S-adenosyl-L-homocysteine + H(+). It participates in cofactor biosynthesis; ubiquinone biosynthesis. Its function is as follows. O-methyltransferase that catalyzes the 2 O-methylation steps in the ubiquinone biosynthetic pathway. This chain is Ubiquinone biosynthesis O-methyltransferase, found in Salmonella choleraesuis (strain SC-B67).